Here is a 112-residue protein sequence, read N- to C-terminus: Cell cycle protein GpsB (112 aa).

Positions 32–75 form a coiled coil; it reads LDDIIKDYETYISTIEELRQENTRLKEEVKQAKKRQEAAQTTVS.

The protein belongs to the GpsB family. Forms polymers through the coiled coil domains. Interacts with PBP1, MreC and EzrA.

It is found in the cytoplasm. Divisome component that associates with the complex late in its assembly, after the Z-ring is formed, and is dependent on DivIC and PBP2B for its recruitment to the divisome. Together with EzrA, is a key component of the system that regulates PBP1 localization during cell cycle progression. Its main role could be the removal of PBP1 from the cell pole after pole maturation is completed. Also contributes to the recruitment of PBP1 to the division complex. Not essential for septum formation. The polypeptide is Cell cycle protein GpsB (Streptococcus mutans serotype c (strain ATCC 700610 / UA159)).